The sequence spans 74 residues: MEIKYLLTVFLVLLIVSDHCQAFPFSLIPHAIGGLISAIKGRRKRDLDGQIDRSRNFRKRDAELEELLSKLPIY.

The first 22 residues, 1-22 (MEIKYLLTVFLVLLIVSDHCQA), serve as a signal peptide directing secretion. Residue Lys-40 is modified to Lysine amide. Positions 46–74 (DLDGQIDRSRNFRKRDAELEELLSKLPIY) are excised as a propeptide.

Expressed by the venom gland.

It localises to the secreted. It is found in the target cell membrane. Has antibacterial activity against the Gram-positive bacteria S.aureus (MIC=48 uM), the Gram-negative bacteria E.coli (MIC=120 uM), and the yeast C.albicans (MIC=64 uM). Causes hemolysis on horse erythrocytes. The polypeptide is Antimicrobial peptide 2 (Androctonus amoreuxi (African fattail scorpion)).